The primary structure comprises 613 residues: DNA mismatch repair protein MutL (613 aa).

This sequence belongs to the DNA mismatch repair MutL/HexB family.

This protein is involved in the repair of mismatches in DNA. It is required for dam-dependent methyl-directed DNA mismatch repair. May act as a 'molecular matchmaker', a protein that promotes the formation of a stable complex between two or more DNA-binding proteins in an ATP-dependent manner without itself being part of a final effector complex. This Flavobacterium psychrophilum (strain ATCC 49511 / DSM 21280 / CIP 103535 / JIP02/86) protein is DNA mismatch repair protein MutL.